The following is an 876-amino-acid chain: Valine--tRNA ligase (876 aa).

Positions 43-53 match the 'HIGH' region motif; sequence PNVTGVLHMGH. The 'KMSKS' region signature appears at 534–538; that stretch reads KMSKS. Lysine 537 lines the ATP pocket. A coiled-coil region spans residues 847 to 876; sequence PEKVVAIEKAKKADAEAKIEALKASLKSLS.

The protein belongs to the class-I aminoacyl-tRNA synthetase family. ValS type 1 subfamily. Monomer.

It localises to the cytoplasm. The catalysed reaction is tRNA(Val) + L-valine + ATP = L-valyl-tRNA(Val) + AMP + diphosphate. Catalyzes the attachment of valine to tRNA(Val). As ValRS can inadvertently accommodate and process structurally similar amino acids such as threonine, to avoid such errors, it has a 'posttransfer' editing activity that hydrolyzes mischarged Thr-tRNA(Val) in a tRNA-dependent manner. This is Valine--tRNA ligase from Christiangramia forsetii (strain DSM 17595 / CGMCC 1.15422 / KT0803) (Gramella forsetii).